We begin with the raw amino-acid sequence, 178 residues long: Small ribosomal subunit protein uS7c (178 aa).

Residues 137-146 (QKKEEIEKSK) show a composition bias toward basic and acidic residues. A disordered region spans residues 137-178 (QKKEEIEKSKSPVNNNKKFISKNKKSKNKKQKKRLKRKKNIY). Over residues 155–178 (FISKNKKSKNKKQKKRLKRKKNIY) the composition is skewed to basic residues.

It belongs to the universal ribosomal protein uS7 family. As to quaternary structure, part of the 30S ribosomal subunit.

It localises to the plastid. In terms of biological role, one of the primary rRNA binding proteins, it binds directly to 16S rRNA where it nucleates assembly of the head domain of the 30S subunit. The protein is Small ribosomal subunit protein uS7c (rps7) of Euglena longa (Euglenophycean alga).